The sequence spans 447 residues: tRNA modification GTPase MnmE (447 aa).

Positions 24, 81, and 120 each coordinate (6S)-5-formyl-5,6,7,8-tetrahydrofolate. Residues 216–371 (GLNVAIAGKP…LRKELSNISG (156 aa)) enclose the TrmE-type G domain. Position 226 (N226) interacts with K(+). Residues 226–231 (NAGKSS), 245–251 (TDIAGTT), and 270–273 (DTAG) each bind GTP. Position 230 (S230) interacts with Mg(2+). Residues T245, I247, and T250 each contribute to the K(+) site. T251 lines the Mg(2+) pocket. Residue K447 coordinates (6S)-5-formyl-5,6,7,8-tetrahydrofolate.

It belongs to the TRAFAC class TrmE-Era-EngA-EngB-Septin-like GTPase superfamily. TrmE GTPase family. As to quaternary structure, homodimer. Heterotetramer of two MnmE and two MnmG subunits. It depends on K(+) as a cofactor.

It is found in the cytoplasm. In terms of biological role, exhibits a very high intrinsic GTPase hydrolysis rate. Involved in the addition of a carboxymethylaminomethyl (cmnm) group at the wobble position (U34) of certain tRNAs, forming tRNA-cmnm(5)s(2)U34. The chain is tRNA modification GTPase MnmE from Vesicomyosocius okutanii subsp. Calyptogena okutanii (strain HA).